The following is a 339-amino-acid chain: Glyceraldehyde-3-phosphate dehydrogenase (339 aa).

NAD(+) is bound by residues 12 to 13, Asp-34, and Lys-79; that span reads RI. Residues 150–152, Thr-181, 210–211, and Arg-233 contribute to the D-glyceraldehyde 3-phosphate site; these read SCT and TG. Cys-151 acts as the Nucleophile in catalysis. An NAD(+)-binding site is contributed by Asn-316.

This sequence belongs to the glyceraldehyde-3-phosphate dehydrogenase family. As to quaternary structure, homotetramer.

It is found in the cytoplasm. It carries out the reaction D-glyceraldehyde 3-phosphate + phosphate + NAD(+) = (2R)-3-phospho-glyceroyl phosphate + NADH + H(+). The protein operates within carbohydrate degradation; glycolysis; pyruvate from D-glyceraldehyde 3-phosphate: step 1/5. This Cryptococcus neoformans var. neoformans serotype D (strain B-3501A) (Filobasidiella neoformans) protein is Glyceraldehyde-3-phosphate dehydrogenase (GPD).